The primary structure comprises 618 residues: MSPMARTAPVPAATDPAIIRNFCIIAHIDHGKSTLADRMLQSTGVVQARDMKAQYLDRMDIERERGITIKSQAVRMPWEVEGVSYALNMIDTPGHVDFTYEVSRSLAACEGAILLVDAAQGIEAQTLANLYLAMENNLTIIPVLNKIDLPAAQPEKYAAELASLIGGDPEDVLRVSGKTGVGVEALLDKIVRDLPAPEGNPDAPARAMIFDSVYDTYRGVVTYVRVVDGMLHPRERIQMMSTRASHELLEIGVSSPEPTPSKGLGVGEVGYLITGVKDVRQSKVGDTVTNLAKPAAQSLPGYADAKPMVFSGLYPLDGADYPVLRDALEKLMLNDAALVYEPETSAALGFGFRVGFLGLLHLEITRERLEREYNLDLISTAPNVEYEVTLEDKKVVRVTNPSEYPTGKIAEVREPMVSATILAPNEFVGAIMELCQSRRGVMGGMDYLSEDRVEIRYRLPLAEIVFDFFDILKSKTRGYGSLDWKADGEQVADLVKVDIMLQGEQVDAFSAITHREKAYAYGVMMTGKLRELIPRQQFEVPIQAAIGSRIIARESIRAIRKDVLAKCYGGDISRKRKLLEKQKEGKKRMKMVGTVEVPQEAFIAALTTDESKDKAKKK.

One can recognise a tr-type G domain in the interval 17–198; the sequence is AIIRNFCIIA…KIVRDLPAPE (182 aa). GTP-binding positions include 29 to 34 and 145 to 148; these read DHGKST and NKID.

It belongs to the TRAFAC class translation factor GTPase superfamily. Classic translation factor GTPase family. LepA subfamily.

The protein resides in the cell membrane. It carries out the reaction GTP + H2O = GDP + phosphate + H(+). Its function is as follows. Required for accurate and efficient protein synthesis under certain stress conditions. May act as a fidelity factor of the translation reaction, by catalyzing a one-codon backward translocation of tRNAs on improperly translocated ribosomes. Back-translocation proceeds from a post-translocation (POST) complex to a pre-translocation (PRE) complex, thus giving elongation factor G a second chance to translocate the tRNAs correctly. Binds to ribosomes in a GTP-dependent manner. This is Elongation factor 4 from Pseudarthrobacter chlorophenolicus (strain ATCC 700700 / DSM 12829 / CIP 107037 / JCM 12360 / KCTC 9906 / NCIMB 13794 / A6) (Arthrobacter chlorophenolicus).